Here is a 231-residue protein sequence, read N- to C-terminus: Large ribosomal subunit protein uL3 (231 aa).

Q151 carries the N5-methylglutamine modification.

It belongs to the universal ribosomal protein uL3 family. Part of the 50S ribosomal subunit. Forms a cluster with proteins L14 and L19. Methylated by PrmB.

In terms of biological role, one of the primary rRNA binding proteins, it binds directly near the 3'-end of the 23S rRNA, where it nucleates assembly of the 50S subunit. The protein is Large ribosomal subunit protein uL3 of Granulibacter bethesdensis (strain ATCC BAA-1260 / CGDNIH1).